The following is a 213-amino-acid chain: Phosphatidylserine decarboxylase proenzyme (213 aa).

Ser-180 functions as the Schiff-base intermediate with substrate; via pyruvic acid in the catalytic mechanism. At Ser-180 the chain carries Pyruvic acid (Ser); by autocatalysis.

This sequence belongs to the phosphatidylserine decarboxylase family. PSD-A subfamily. In terms of assembly, heterodimer of a large membrane-associated beta subunit and a small pyruvoyl-containing alpha subunit. It depends on pyruvate as a cofactor. Post-translationally, is synthesized initially as an inactive proenzyme. Formation of the active enzyme involves a self-maturation process in which the active site pyruvoyl group is generated from an internal serine residue via an autocatalytic post-translational modification. Two non-identical subunits are generated from the proenzyme in this reaction, and the pyruvate is formed at the N-terminus of the alpha chain, which is derived from the carboxyl end of the proenzyme. The post-translation cleavage follows an unusual pathway, termed non-hydrolytic serinolysis, in which the side chain hydroxyl group of the serine supplies its oxygen atom to form the C-terminus of the beta chain, while the remainder of the serine residue undergoes an oxidative deamination to produce ammonia and the pyruvoyl prosthetic group on the alpha chain.

The protein resides in the cell membrane. The enzyme catalyses a 1,2-diacyl-sn-glycero-3-phospho-L-serine + H(+) = a 1,2-diacyl-sn-glycero-3-phosphoethanolamine + CO2. It participates in phospholipid metabolism; phosphatidylethanolamine biosynthesis; phosphatidylethanolamine from CDP-diacylglycerol: step 2/2. In terms of biological role, catalyzes the formation of phosphatidylethanolamine (PtdEtn) from phosphatidylserine (PtdSer). This is Phosphatidylserine decarboxylase proenzyme from Carboxydothermus hydrogenoformans (strain ATCC BAA-161 / DSM 6008 / Z-2901).